Here is a 251-residue protein sequence, read N- to C-terminus: Pyrroloquinoline-quinone synthase (251 aa).

Belongs to the PqqC family.

The enzyme catalyses 6-(2-amino-2-carboxyethyl)-7,8-dioxo-1,2,3,4,7,8-hexahydroquinoline-2,4-dicarboxylate + 3 O2 = pyrroloquinoline quinone + 2 H2O2 + 2 H2O + H(+). Its pathway is cofactor biosynthesis; pyrroloquinoline quinone biosynthesis. In terms of biological role, ring cyclization and eight-electron oxidation of 3a-(2-amino-2-carboxyethyl)-4,5-dioxo-4,5,6,7,8,9-hexahydroquinoline-7,9-dicarboxylic-acid to PQQ. The polypeptide is Pyrroloquinoline-quinone synthase (Pseudomonas putida (strain ATCC 700007 / DSM 6899 / JCM 31910 / BCRC 17059 / LMG 24140 / F1)).